We begin with the raw amino-acid sequence, 508 residues long: Histidine ammonia-lyase (508 aa).

Residues 141–143 (ASG) constitute a cross-link (5-imidazolinone (Ala-Gly)). Residue serine 142 is modified to 2,3-didehydroalanine (Ser).

This sequence belongs to the PAL/histidase family. Post-translationally, contains an active site 4-methylidene-imidazol-5-one (MIO), which is formed autocatalytically by cyclization and dehydration of residues Ala-Ser-Gly.

The protein localises to the cytoplasm. The enzyme catalyses L-histidine = trans-urocanate + NH4(+). Its pathway is amino-acid degradation; L-histidine degradation into L-glutamate; N-formimidoyl-L-glutamate from L-histidine: step 1/3. The chain is Histidine ammonia-lyase from Geobacillus sp. (strain WCH70).